We begin with the raw amino-acid sequence, 78 residues long: RNA-binding protein Hfq (78 aa).

In terms of domain architecture, Sm spans 10 to 69 (DPFLNALRKEHVPVSIYLVNGIKLQGHIESFDQYVVLLRNTVTQMVYKHAISTVVPARAV).

This sequence belongs to the Hfq family. In terms of assembly, homohexamer.

Functionally, RNA chaperone that binds small regulatory RNA (sRNAs) and mRNAs to facilitate mRNA translational regulation in response to envelope stress, environmental stress and changes in metabolite concentrations. Also binds with high specificity to tRNAs. This Herminiimonas arsenicoxydans protein is RNA-binding protein Hfq.